Reading from the N-terminus, the 839-residue chain is Taste receptor type 1 member 2 (839 aa).

A signal peptide spans Met-1–Ala-19. At Glu-20–Thr-566 the chain is on the extracellular side. 9 N-linked (GlcNAc...) asparagine glycosylation sites follow: Asn-84, Asn-248, Asn-292, Asn-312, Asn-368, Asn-407, Asn-428, Asn-487, and Asn-527. Residues Ile-567 to Phe-587 traverse the membrane as a helical segment. Over Trp-588–Pro-602 the chain is Cytoplasmic. Residues Met-603–Gly-623 form a helical membrane-spanning segment. Residues Pro-624–Ala-635 lie on the Extracellular side of the membrane. A helical membrane pass occupies residues Leu-636 to Val-656. Residues Cys-657–Ser-681 are Cytoplasmic-facing. The helical transmembrane segment at Met-682–Leu-702 threads the bilayer. Topologically, residues Ser-703 to Ser-727 are extracellular. A helical transmembrane segment spans residues Leu-728–Met-748. Residues Gly-749–Lys-760 lie on the Cytoplasmic side of the membrane. A helical transmembrane segment spans residues Phe-761–Ser-781. Over Ala-782–Ser-784 the chain is Extracellular. A helical transmembrane segment spans residues Gly-785 to Leu-805. The Cytoplasmic segment spans residues Gly-806 to Asp-839.

Belongs to the G-protein coupled receptor 3 family. TAS1R subfamily. Forms heterodimers with TAS1R3.

The protein localises to the cell membrane. In terms of biological role, putative taste receptor. TAS1R2/TAS1R3 recognizes diverse natural and synthetic sweeteners. This Gorilla gorilla gorilla (Western lowland gorilla) protein is Taste receptor type 1 member 2 (TAS1R2).